The chain runs to 396 residues: Ribosomal RNA large subunit methyltransferase I (396 aa).

One can recognise a PUA domain in the interval 2–81 (TVRLFLAKGR…EEINIEFFIR (80 aa)).

This sequence belongs to the methyltransferase superfamily. RlmI family.

It is found in the cytoplasm. It carries out the reaction cytidine(1962) in 23S rRNA + S-adenosyl-L-methionine = 5-methylcytidine(1962) in 23S rRNA + S-adenosyl-L-homocysteine + H(+). Its function is as follows. Specifically methylates the cytosine at position 1962 (m5C1962) of 23S rRNA. The polypeptide is Ribosomal RNA large subunit methyltransferase I (Serratia proteamaculans (strain 568)).